The sequence spans 674 residues: Glutaminase kidney isoform, mitochondrial (674 aa).

A mitochondrion-targeting transit peptide spans 1-54 (MMRLRGSAMLRELLLRPPAAVGAVLRRAQPLGTLCRRPRGGSRPTAGLVAAARL). The disordered stretch occupies residues 56 to 123 (PWWGGGGRAK…PGETDAFGNS (68 aa)). A compositionally biased stretch (gly residues) spans 58 to 71 (WGGGGRAKGPGAGG). A compositionally biased stretch (low complexity) spans 89 to 101 (PPQQQQQQQQQPG). 2 positions are modified to N6-succinyllysine: Lys-135 and Lys-169. Residue Ser-291 participates in substrate binding. Residue Lys-316 is modified to N6-acetyllysine. The interval 320–327 (GLRFNKLF) is highly mobile activation loop. Substrate is bound by residues Asn-340, Glu-386, Asn-393, Tyr-419, Tyr-471, and Val-489. 2 ANK repeats span residues 590–619 (DSRTALHVAAAEGHVEVVKFLLEACKVNPF) and 624–653 (WNNTPMDEALHFGHHDVFKILQEYQVQYTP). A disordered region spans residues 652-674 (TPQGDSDDGKGNQTVHKNLDGLL). At Ser-657 the chain carries Phosphoserine.

It belongs to the glutaminase family. As to quaternary structure, homotetramer, dimer of dimers. The tetramers can assemble into rod-like oligomers (in vitro), but the physiological significance of this is not clear. Interacts with RAF1 and MAP2K2. Interacts with ATCAY; the interaction is direct and may control GLS localization, negatively regulating its activity. In terms of processing, synthesized as a 74-kDa cytosolic precursor which is proteolytically processed by the mitochondrial-processing peptidase (MPP) via a 72-kDa intermediate to yield the mature mitochondrial 68- and 65-kDa subunits.

Its subcellular location is the mitochondrion. The protein resides in the cytoplasm. The protein localises to the cytosol. It localises to the mitochondrion matrix. The catalysed reaction is L-glutamine + H2O = L-glutamate + NH4(+). Its activity is regulated as follows. Isoform 1 and isoform 2 are activated by phosphate, due to increased affinity for glutamine. At phosphate concentrations above 10 mM, isoform 2 is more efficient than isoform 1. Functionally, catalyzes the first reaction in the primary pathway for the renal catabolism of glutamine. Plays a role in maintaining acid-base homeostasis. Regulates the levels of the neurotransmitter glutamate, the main excitatory neurotransmitter in the brain. In Mus musculus (Mouse), this protein is Glutaminase kidney isoform, mitochondrial (Gls).